The sequence spans 808 residues: Probable inorganic carbon transporter subunit DabA (808 aa).

Cysteine 335, aspartate 337, histidine 497, and cysteine 512 together coordinate Zn(2+).

The protein belongs to the inorganic carbon transporter (TC 9.A.2) DabA family. In terms of assembly, forms a complex with DabB. The cofactor is Zn(2+).

The protein localises to the cell inner membrane. In terms of biological role, part of an energy-coupled inorganic carbon pump. This chain is Probable inorganic carbon transporter subunit DabA, found in Rhodopseudomonas palustris (strain TIE-1).